We begin with the raw amino-acid sequence, 139 residues long: Gas vesicle protein A (139 aa).

The tract at residues 113–139 is disordered; sequence EKLGDMLTSDEPEPRKATRVRSRRADR. Residues 129 to 139 are compositionally biased toward basic residues; the sequence is ATRVRSRRADR.

It belongs to the gas vesicle GvpA family. As to quaternary structure, the gas vesicle shell is 2 nm thick and consists of a single layer of this protein. It forms helical ribs nearly perpendicular to the long axis of the vesicle.

The protein resides in the gas vesicle shell. Gas vesicles are hollow, gas filled proteinaceous nanostructures found in some microorganisms. During planktonic growth they allow positioning of the organism at a favorable depth for light or nutrient acquisition. GvpA forms the protein shell. The protein is Gas vesicle protein A of Mycobacterium sp. (strain JLS).